A 167-amino-acid polypeptide reads, in one-letter code: Glutathione peroxidase 1 (167 aa).

C41 is a catalytic residue.

Belongs to the glutathione peroxidase family.

It catalyses the reaction 2 glutathione + H2O2 = glutathione disulfide + 2 H2O. In terms of biological role, may constitute a glutathione peroxidase-like protective system against oxidative stresses. The chain is Glutathione peroxidase 1 (GPXHA-1) from Helianthus annuus (Common sunflower).